Consider the following 307-residue polypeptide: MTESSPLAPSTAPATRKLWLAAIKPPMYTVAVVPITVGSAVAYGLTGQWHGDVFTIFLLSAIAIIAWINLSNDVFDSDTGIDVRKAHSVVNLTGNRNLVFLISNFFLLAGVLGLMSMSWRAQDWTVLELIGVAIFLGYTYQGPPFRLGYLGLGELICLITFGPLAIAAAYYSQSQSFSWNLLTPSVFVGISTAIILFCSHFHQVEDDLAAGKKSPIVRLGTKLGSQVLTLSVVSLYLITAIGVLCHQAPWQTLLIIASLPWAVQLIRHVGQYHDQPEQVSNCKFIAVNLHFFSGMLMAAGYGWAGLG.

A run of 8 helical transmembrane segments spans residues 27-47 (MYTVAVVPITVGSAVAYGLTG), 51-71 (GDVFTIFLLSAIAIIAWINLS), 98-118 (LVFLISNFFLLAGVLGLMSMS), 125-145 (TVLELIGVAIFLGYTYQGPPF), 147-167 (LGYLGLGELICLITFGPLAIA), 177-197 (FSWNLLTPSVFVGISTAIILF), 223-243 (LGSQVLTLSVVSLYLITAIGV), and 284-304 (FIAVNLHFFSGMLMAAGYGWA).

Belongs to the MenA family. Type 2 subfamily.

Its subcellular location is the cell inner membrane. The enzyme catalyses 2-carboxy-1,4-naphthoquinone + phytyl diphosphate + H(+) = demethylphylloquinone + CO2 + diphosphate. The protein operates within cofactor biosynthesis; phylloquinone biosynthesis. Its function is as follows. Involved in the synthesis of phylloquinone (vitamin K1). Catalyzes the transfer of a prenyl chain to 2-carboxy-1,4-naphthoquinone. This chain is 2-carboxy-1,4-naphthoquinone phytyltransferase, found in Synechocystis sp. (strain ATCC 27184 / PCC 6803 / Kazusa).